Here is a 113-residue protein sequence, read N- to C-terminus: Large ribosomal subunit protein uL18 (113 aa).

Belongs to the universal ribosomal protein uL18 family. In terms of assembly, part of the 50S ribosomal subunit; part of the 5S rRNA/L5/L18/L25 subcomplex. Contacts the 5S and 23S rRNAs.

This is one of the proteins that bind and probably mediate the attachment of the 5S RNA into the large ribosomal subunit, where it forms part of the central protuberance. This Phocaeicola vulgatus (strain ATCC 8482 / DSM 1447 / JCM 5826 / CCUG 4940 / NBRC 14291 / NCTC 11154) (Bacteroides vulgatus) protein is Large ribosomal subunit protein uL18.